The chain runs to 230 residues: Ribonuclease 3 (230 aa).

The 121-residue stretch at 5–125 folds into the RNase III domain; it reads YSRFYNILGY…VIGAIYLDSD (121 aa). Glu40 provides a ligand contact to Mg(2+). Residue Asp44 is part of the active site. The Mg(2+) site is built by Asp111 and Glu114. The active site involves Glu114. Residues 153–223 form the DRBM domain; the sequence is DSKSKLQEIL…AEKMIEMLSQ (71 aa).

This sequence belongs to the ribonuclease III family. As to quaternary structure, homodimer. Mg(2+) is required as a cofactor.

The protein localises to the cytoplasm. The catalysed reaction is Endonucleolytic cleavage to 5'-phosphomonoester.. In terms of biological role, digests double-stranded RNA. Involved in the processing of primary rRNA transcript to yield the immediate precursors to the large and small rRNAs (23S and 16S). Also processes some mRNAs, and tRNAs when they are encoded in the rRNA operon. Functionally, CRISPR (clustered regularly interspaced short palindromic repeat) is an adaptive immune system that provides protection against mobile genetic elements (viruses, transposable elements and conjugative plasmids). CRISPR clusters contain spacers, sequences complementary to antecedent mobile elements, and target invading nucleic acids. CRISPR clusters are transcribed and processed into CRISPR RNA (crRNA). In this organism endogenous ribonuclease 3 and Cas9 are required for correct coprocessing of pre-crRNA and the trans-encoded small RNA (tracrRNA). Cas9, crRNA and tracrRNA are required for cleavage of invading DNA. Complements pre-crRNA and tracrRNA coprocessing defects in an rnc deletion in S.pyogenes strain 370. The sequence is that of Ribonuclease 3 from Francisella tularensis subsp. novicida (strain U112).